The following is a 199-amino-acid chain: NADH-quinone oxidoreductase subunit I (199 aa).

4Fe-4S ferredoxin-type domains follow at residues 45–75 (LNRH…VEGA) and 91–120 (RVYQ…MSNE). The [4Fe-4S] cluster site is built by cysteine 55, cysteine 58, cysteine 61, cysteine 65, cysteine 100, cysteine 103, cysteine 106, and cysteine 110. The tract at residues 164-199 (GTPAAHMLSGEDDAASETTLDRSDDHSATYEEAERP) is disordered. The span at 182–199 (TLDRSDDHSATYEEAERP) shows a compositional bias: basic and acidic residues.

It belongs to the complex I 23 kDa subunit family. As to quaternary structure, NDH-1 is composed of 14 different subunits. Subunits NuoA, H, J, K, L, M, N constitute the membrane sector of the complex. Requires [4Fe-4S] cluster as cofactor.

It is found in the cell membrane. It catalyses the reaction a quinone + NADH + 5 H(+)(in) = a quinol + NAD(+) + 4 H(+)(out). Its function is as follows. NDH-1 shuttles electrons from NADH, via FMN and iron-sulfur (Fe-S) centers, to quinones in the respiratory chain. The immediate electron acceptor for the enzyme in this species is believed to be ubiquinone. Couples the redox reaction to proton translocation (for every two electrons transferred, four hydrogen ions are translocated across the cytoplasmic membrane), and thus conserves the redox energy in a proton gradient. This is NADH-quinone oxidoreductase subunit I from Acidothermus cellulolyticus (strain ATCC 43068 / DSM 8971 / 11B).